Consider the following 622-residue polypeptide: Chaperone protein HscA homolog (622 aa).

This sequence belongs to the heat shock protein 70 family.

In terms of biological role, chaperone involved in the maturation of iron-sulfur cluster-containing proteins. Has a low intrinsic ATPase activity which is markedly stimulated by HscB. The polypeptide is Chaperone protein HscA homolog (Burkholderia thailandensis (strain ATCC 700388 / DSM 13276 / CCUG 48851 / CIP 106301 / E264)).